The sequence spans 270 residues: A-type potassium channel modulatory protein KCNIP2 (270 aa).

The segment covering 1–17 (MRGQGRKESLSDSRDLD) has biased composition (basic and acidic residues). A disordered region spans residues 1 to 32 (MRGQGRKESLSDSRDLDGSYDQLTGHPPGPTK). Position 9 is a phosphoserine (S9). S-palmitoyl cysteine attachment occurs at residues C45 and C46. An EF-hand 1; degenerate domain is found at 81-137 (FELSTVCHRPEGLEQLQEQTKFTRKELQVLYRGFKNECPSGIVNEENFKQIYSQFFP). 3 consecutive EF-hand domains span residues 140-175 (DSST…ILRG), 176-211 (TVDD…IYDM), and 224-259 (APRE…DENI). Residues D153, N155, D157, S159, D164, D189, N191, D193, C195, E200, D237, N239, D241, and E248 each contribute to the Ca(2+) site. The segment at 257-270 (ENIMRSMQLFDNVI) is interaction with KCND2.

This sequence belongs to the recoverin family. In terms of assembly, component of heteromultimeric potassium channels. Identified in potassium channel complexes containing KCND1, KCND2, KCND3, KCNIP1, KCNIP2, KCNIP3, KCNIP4, DPP6 and DPP10. The KCND2-KCNIP2 channel complex contains four KCND2 and four KCNIP2 subunits. Interacts with KCND2. Probably part of a complex consisting of KCNIP1, KCNIP2 isoform 3 and KCND2. At least isoform 2 and isoform 3 can self-associate to form homodimers and homotetramers. Isoform 3 interacts with KCNIP1 in a calcium-dependent manner. Interacts with KCND3; each KCNIP2 monomer interacts with two adjacent KCND3 subunits, through both the N-terminal inactivation ball of a KCND3 subunit and a C-terminal helix from the adjacent KCND3 subunit, clamping them together; this interaction modulates the channel gating kinetics. In terms of processing, palmitoylated. Palmitoylation enhances association with the plasma membrane. Expressed in brain. Colocalizes with KCND2 in excitatory neurons including cortical and hippocampal CA1 pyramidal cells. Isoform 3 is expressed in heart and in umbilical vein endothelial cells. Not expressed in fetal heart.

It localises to the cell membrane. Functionally, regulatory subunit of Kv4/D (Shal)-type voltage-gated rapidly inactivating A-type potassium channels. Modulates channel density, inactivation kinetics and rate of recovery from inactivation in a calcium-dependent and isoform-specific manner. Involved in KCND2 and KCND3 trafficking to the cell surface. May be required for the expression of I(To) currents in the heart. This Homo sapiens (Human) protein is A-type potassium channel modulatory protein KCNIP2.